Consider the following 302-residue polypeptide: 4-hydroxy-tetrahydrodipicolinate synthase (302 aa).

T46 lines the pyruvate pocket. Catalysis depends on Y134, which acts as the Proton donor/acceptor. K162 (schiff-base intermediate with substrate) is an active-site residue. V204 lines the pyruvate pocket.

This sequence belongs to the DapA family. As to quaternary structure, homotetramer; dimer of dimers.

The protein resides in the cytoplasm. It catalyses the reaction L-aspartate 4-semialdehyde + pyruvate = (2S,4S)-4-hydroxy-2,3,4,5-tetrahydrodipicolinate + H2O + H(+). It functions in the pathway amino-acid biosynthesis; L-lysine biosynthesis via DAP pathway; (S)-tetrahydrodipicolinate from L-aspartate: step 3/4. In terms of biological role, catalyzes the condensation of (S)-aspartate-beta-semialdehyde [(S)-ASA] and pyruvate to 4-hydroxy-tetrahydrodipicolinate (HTPA). This chain is 4-hydroxy-tetrahydrodipicolinate synthase, found in Xylella fastidiosa (strain Temecula1 / ATCC 700964).